A 323-amino-acid polypeptide reads, in one-letter code: 1D-myo-inositol 2-acetamido-2-deoxy-alpha-D-glucopyranoside deacetylase (323 aa).

Zn(2+)-binding residues include histidine 28, aspartate 31, and histidine 163.

The protein belongs to the MshB deacetylase family. The cofactor is Zn(2+).

The enzyme catalyses 1D-myo-inositol 2-acetamido-2-deoxy-alpha-D-glucopyranoside + H2O = 1D-myo-inositol 2-amino-2-deoxy-alpha-D-glucopyranoside + acetate. Functionally, catalyzes the deacetylation of 1D-myo-inositol 2-acetamido-2-deoxy-alpha-D-glucopyranoside (GlcNAc-Ins) in the mycothiol biosynthesis pathway. This is 1D-myo-inositol 2-acetamido-2-deoxy-alpha-D-glucopyranoside deacetylase from Streptomyces scabiei (strain 87.22).